The primary structure comprises 118 residues: Large ribosomal subunit protein bL20 (118 aa).

The protein belongs to the bacterial ribosomal protein bL20 family.

Binds directly to 23S ribosomal RNA and is necessary for the in vitro assembly process of the 50S ribosomal subunit. It is not involved in the protein synthesizing functions of that subunit. The sequence is that of Large ribosomal subunit protein bL20 from Pseudomonas aeruginosa (strain LESB58).